Here is a 65-residue protein sequence, read N- to C-terminus: MPKMKTHKGAKKRVKITASGKVVAMKTGKRHLNWQKSGKEIRQKGRKFVLAKPEAERIKLLLPYE.

This sequence belongs to the bacterial ribosomal protein bL35 family.

This is Large ribosomal subunit protein bL35 from Thermus thermophilus (strain ATCC BAA-163 / DSM 7039 / HB27).